The primary structure comprises 407 residues: 1-deoxy-D-xylulose 5-phosphate reductoisomerase (407 aa).

6 residues coordinate NADPH: Thr-25, Gly-26, Ser-27, Ile-28, Asn-53, and Asn-136. 1-deoxy-D-xylulose 5-phosphate is bound at residue Lys-137. NADPH is bound at residue Glu-138. Asp-162 provides a ligand contact to Mn(2+). 1-deoxy-D-xylulose 5-phosphate is bound by residues Ser-163, Glu-164, Ser-188, and His-211. A Mn(2+)-binding site is contributed by Glu-164. Gly-217 is a binding site for NADPH. 1-deoxy-D-xylulose 5-phosphate-binding residues include Ser-224, Asn-229, Lys-230, and Glu-233. Position 233 (Glu-233) interacts with Mn(2+).

Belongs to the DXR family. Mg(2+) serves as cofactor. Mn(2+) is required as a cofactor.

The catalysed reaction is 2-C-methyl-D-erythritol 4-phosphate + NADP(+) = 1-deoxy-D-xylulose 5-phosphate + NADPH + H(+). It participates in isoprenoid biosynthesis; isopentenyl diphosphate biosynthesis via DXP pathway; isopentenyl diphosphate from 1-deoxy-D-xylulose 5-phosphate: step 1/6. In terms of biological role, catalyzes the NADPH-dependent rearrangement and reduction of 1-deoxy-D-xylulose-5-phosphate (DXP) to 2-C-methyl-D-erythritol 4-phosphate (MEP). The protein is 1-deoxy-D-xylulose 5-phosphate reductoisomerase of Rhodopseudomonas palustris (strain HaA2).